The sequence spans 122 residues: Large ribosomal subunit protein uL14 (122 aa).

It belongs to the universal ribosomal protein uL14 family. In terms of assembly, part of the 50S ribosomal subunit. Forms a cluster with proteins L3 and L19. In the 70S ribosome, L14 and L19 interact and together make contacts with the 16S rRNA in bridges B5 and B8.

Binds to 23S rRNA. Forms part of two intersubunit bridges in the 70S ribosome. In Gluconacetobacter diazotrophicus (strain ATCC 49037 / DSM 5601 / CCUG 37298 / CIP 103539 / LMG 7603 / PAl5), this protein is Large ribosomal subunit protein uL14.